A 390-amino-acid polypeptide reads, in one-letter code: Zinc transporter 7 (390 aa).

Topologically, residues 1–37 (MLPLSIKDDEYKPPKFNLVRKVSGWIRSIFSDTTSRN) are cytoplasmic. The chain crosses the membrane as a helical span at residues 38 to 58 (LFCFLCLNLSFAFVELFYGIW). At 59 to 67 (SNSLGLISD) the chain is on the lumenal side. The helical transmembrane segment at 68-88 (SFHMFFDCTALLAGLAASVIS) threads the bilayer. The Cytoplasmic segment spans residues 89-102 (RWKTNEAFSYGYVR). The helical transmembrane segment at 103–123 (AEVLAGFVNGLFLIFTAFFIF) threads the bilayer. The Lumenal segment spans residues 124–140 (SEGIERALDTPEVHHER). A helical membrane pass occupies residues 141–161 (LLPVSILGFLVNLIGIFVFQH). A his-rich loop region spans residues 161–226 (HGGGHGHSHE…SHDQSHKHGH (66 aa)). The Cytoplasmic portion of the chain corresponds to 162–250 (GGGHGHSHES…TGSSKQILEG (89 aa)). Positions 167-243 (HSHESGHGHS…DEPPEEHTGS (77 aa)) are disordered. A compositionally biased stretch (low complexity) spans 177 to 186 (HSLFNGSLSH). Over residues 187 to 208 (GHSHSHGGSHGHSHGGGHGHSH) the composition is skewed to basic residues. 2 stretches are compositionally biased toward basic and acidic residues: residues 209–222 (SHGE…DQSH) and 232–242 (CHDEPPEEHTG). Residues 251–271 (VFLHIVADALGSVGVIISTIL) traverse the membrane as a helical segment. The Lumenal portion of the chain corresponds to 272–276 (MQRYG). The helical transmembrane segment at 277–297 (LMIADPICSMLIALLIFVSVI) threads the bilayer. At 298-390 (PLLKQSIGIL…LYVQIDMAAM (93 aa)) the chain is on the cytoplasmic side.

This sequence belongs to the cation diffusion facilitator (CDF) transporter (TC 2.A.4) family. SLC30A subfamily. As to quaternary structure, homooligomer.

It localises to the golgi apparatus membrane. Its subcellular location is the cytoplasmic vesicle. The protein localises to the golgi apparatus. It is found in the trans-Golgi network. The protein resides in the sarcoplasmic reticulum. It localises to the mitochondrion. The catalysed reaction is Zn(2+)(in) = Zn(2+)(out). Zinc ion transporter mediating zinc entry from the cytosol into the lumen of organelles along the secretory pathway. By contributing to zinc ion homeostasis within the early secretory pathway, regulates the activation and folding of enzymes like alkaline phosphatases. The chain is Zinc transporter 7 (slc30a7) from Xenopus tropicalis (Western clawed frog).